We begin with the raw amino-acid sequence, 507 residues long: Phosphoprotein (507 aa).

The tract at residues 1-48 (MAEEQARHVKNGLECIRALKAEPIGSLAIGEAMAAWSEISDNPGQEQA) is interaction with N0. Disordered stretches follow at residues 40 to 98 (SDNP…FPSR), 134 to 174 (GLDG…APIS), 201 to 231 (NNFP…IKKG), and 251 to 305 (ATQC…KGGD). Serine 86 is subject to Phosphoserine. Residues 134 to 145 (GLDGDSTLSGGD) are compositionally biased toward low complexity. A compositionally biased stretch (acidic residues) spans 146–160 (NESENSDVDIGEPDT). Serine 151 is subject to Phosphoserine. Low complexity predominate over residues 260 to 270 (SEPSGPGAPAG). The span at 279 to 300 (AALTQEWTPESGTTISPRSQNK) shows a compositional bias: polar residues. Residues 304 to 376 (GDYYDDELFS…LSSIMIAIPG (73 aa)) are multimerization. Interaction with the L polymerase stretches follow at residues 361–377 (STLE…IPGL) and 396–410 (PIIG…AEVL). The segment at 457 to 507 (GPASRSVIRSIIKSSRIEEDRKRYLMTLLDDIKGANDLAKFHQMLMKIIMK) is x domain (XD). The tract at residues 459–507 (ASRSVIRSIIKSSRIEEDRKRYLMTLLDDIKGANDLAKFHQMLMKIIMK) is interaction with the nucleocapsid (N-RNA).

It belongs to the morbillivirus P protein family. In terms of assembly, homotetramer. Interacts (via multimerization domain and XD domain) with polymerase L; this interaction forms the polymerase L-P complex. Interacts (via N-terminus) with N0 (via Ncore); this interaction allows P to chaperon N0 to avoid N polymerization and non-specific RNA binding before encapsidation. Interacts (via C-terminus) with N-RNA template (via Ntail); this interaction maintains the P/L complex anchored to the nucleocapsid template during the sequential transcription. Interacts (via C-terminus) with protein C this interaction allows C to associate with the ribonucleocapsid. In terms of processing, phosphorylation on serines by host CK2 is necessary for the formation of viral factories.

In terms of biological role, essential cofactor of the RNA polymerase L that plays a central role in the transcription and replication by forming the polymerase complex with RNA polymerase L and recruiting L to the genomic N-RNA template for RNA synthesis. Also plays a central role in the encapsidation of nascent RNA chains by forming the encapsidation complex with the nucleocapsid protein N (N-P complex). Acts as a chaperone for newly synthesized free N protein, so-called N0, allowing encapsidation of nascent RNA chains during replication. The nucleoprotein protein N prevents excessive phosphorylation of P, which leads to down-regulation of viral transcription/ replication. Participates, together with N, in the formation of viral factories (viroplasms), which are large inclusions in the host cytoplasm where replication takes place. In Homo sapiens (Human), this protein is Phosphoprotein (P/V).